The sequence spans 601 residues: NADH-quinone oxidoreductase subunit C/D (601 aa).

The interval 1 to 191 (MKLTRDFPHN…DPFMLDAAKQ (191 aa)) is NADH dehydrogenase I subunit C. The NADH dehydrogenase I subunit D stretch occupies residues 215–601 (DYMFLNLGPN…IDFVMSDVDR (387 aa)).

In the N-terminal section; belongs to the complex I 30 kDa subunit family. It in the C-terminal section; belongs to the complex I 49 kDa subunit family. As to quaternary structure, NDH-1 is composed of 13 different subunits. Subunits NuoB, CD, E, F, and G constitute the peripheral sector of the complex.

It localises to the cell inner membrane. It catalyses the reaction a quinone + NADH + 5 H(+)(in) = a quinol + NAD(+) + 4 H(+)(out). In terms of biological role, NDH-1 shuttles electrons from NADH, via FMN and iron-sulfur (Fe-S) centers, to quinones in the respiratory chain. The immediate electron acceptor for the enzyme in this species is believed to be ubiquinone. Couples the redox reaction to proton translocation (for every two electrons transferred, four hydrogen ions are translocated across the cytoplasmic membrane), and thus conserves the redox energy in a proton gradient. This is NADH-quinone oxidoreductase subunit C/D from Shewanella oneidensis (strain ATCC 700550 / JCM 31522 / CIP 106686 / LMG 19005 / NCIMB 14063 / MR-1).